A 290-amino-acid polypeptide reads, in one-letter code: Fructose-1,6-bisphosphatase class 1 (290 aa).

Positions 78, 96, 98, and 99 each coordinate Mg(2+). Substrate is bound by residues 99-102 (DGSS), Tyr201, and Lys226. Glu232 is a binding site for Mg(2+).

It belongs to the FBPase class 1 family. As to quaternary structure, homotetramer. Mg(2+) is required as a cofactor.

It is found in the cytoplasm. It carries out the reaction beta-D-fructose 1,6-bisphosphate + H2O = beta-D-fructose 6-phosphate + phosphate. It participates in carbohydrate biosynthesis; gluconeogenesis. This Helicobacter acinonychis (strain Sheeba) protein is Fructose-1,6-bisphosphatase class 1.